Consider the following 563-residue polypeptide: MDTKTLIASEIAKVVPELEQDAIFNLLETPKNSDMGDLAFPAFSLAKVLRKAPQMIASELAEQIDESQFEKVVAVGPYINFFLDKAKISSQVLEQVITAGSDYAQQDEGQGRNVAIDMSSPNIAKPFSIGHLRSTVIGDSLAHIFAKMGYKPVKINHLGDWGKQFGMLIVAYKKWGDEAAVQAHPIDELLKLYVRINAEAETDPTVDEEAREWFRKLEDGDKEATELWQWFRDESLLEFNRLYDQLHVTFDSYNGEAFYNDKMDEVLDLLEAKNLLVESKGAQVVNLEKYGIEHPALIKKSDGATLYITRDLAAALYRKRTYDFAKSVYVVGNEQAAHFKQLKAVLKEMGYDWSDDMTHVAFGLVTKGGAKLSTRKGNVILLEPTVAEAINRAASQIEAKNPNLADKEAVAHAVGVGAIKFYDLKTDRMNGYDFDLEAMVSFEGETGPYVQYAHARIQSILRKADFTPSATTTYSLADAESWEIIKLIQDFPRIIKRTSDNFEPSIMAKFAINLAQSFNKYYAHTRILDDNSERDNRLALCYATATVLKEALRLLGVDAPNEM.

The 'HIGH' region motif lies at Pro121–His131.

Belongs to the class-I aminoacyl-tRNA synthetase family. In terms of assembly, monomer.

The protein localises to the cytoplasm. It carries out the reaction tRNA(Arg) + L-arginine + ATP = L-arginyl-tRNA(Arg) + AMP + diphosphate. In Streptococcus pyogenes serotype M1, this protein is Arginine--tRNA ligase.